A 192-amino-acid polypeptide reads, in one-letter code: Archaemetzincin (192 aa).

Residue His137 participates in Zn(2+) binding. Glu138 (proton acceptor) is an active-site residue. Zn(2+)-binding residues include His141, His147, Cys148, Cys153, Cys172, and Cys175.

It belongs to the peptidase M54 family. As to quaternary structure, monomer. It depends on Zn(2+) as a cofactor.

Its function is as follows. Probable zinc metalloprotease whose natural substrate is unknown. The protein is Archaemetzincin of Pyrococcus furiosus (strain ATCC 43587 / DSM 3638 / JCM 8422 / Vc1).